The primary structure comprises 513 residues: 2,3-bisphosphoglycerate-independent phosphoglycerate mutase (513 aa).

Positions 14 and 64 each coordinate Mn(2+). The active-site Phosphoserine intermediate is serine 64. Substrate is bound by residues histidine 125, 155–156 (RD), arginine 187, arginine 193, 259–262 (RADR), and lysine 333. Residues aspartate 400, histidine 404, aspartate 441, histidine 442, and histidine 460 each coordinate Mn(2+).

It belongs to the BPG-independent phosphoglycerate mutase family. As to quaternary structure, monomer. Mn(2+) is required as a cofactor.

The enzyme catalyses (2R)-2-phosphoglycerate = (2R)-3-phosphoglycerate. The protein operates within carbohydrate degradation; glycolysis; pyruvate from D-glyceraldehyde 3-phosphate: step 3/5. In terms of biological role, catalyzes the interconversion of 2-phosphoglycerate and 3-phosphoglycerate. This Pseudomonas fluorescens (strain ATCC BAA-477 / NRRL B-23932 / Pf-5) protein is 2,3-bisphosphoglycerate-independent phosphoglycerate mutase.